The primary structure comprises 445 residues: Xylose isomerase (445 aa).

Catalysis depends on residues histidine 107 and aspartate 110. Mg(2+)-binding residues include glutamate 238, glutamate 274, histidine 277, aspartate 302, aspartate 313, aspartate 315, and aspartate 345.

It belongs to the xylose isomerase family. Homotetramer. Requires Mg(2+) as cofactor.

It is found in the cytoplasm. It carries out the reaction alpha-D-xylose = alpha-D-xylulofuranose. The protein is Xylose isomerase (xylA) of Bacillus spizizenii (strain ATCC 23059 / NRRL B-14472 / W23) (Bacillus subtilis subsp. spizizenii).